A 358-amino-acid chain; its full sequence is Methylthioribose-1-phosphate isomerase (358 aa).

Residues 54 to 56 (RGA), arginine 96, and glutamine 205 each bind substrate. Aspartate 246 serves as the catalytic Proton donor. 256–257 (NK) serves as a coordination point for substrate.

The protein belongs to the eIF-2B alpha/beta/delta subunits family. MtnA subfamily.

It catalyses the reaction 5-(methylsulfanyl)-alpha-D-ribose 1-phosphate = 5-(methylsulfanyl)-D-ribulose 1-phosphate. It participates in amino-acid biosynthesis; L-methionine biosynthesis via salvage pathway; L-methionine from S-methyl-5-thio-alpha-D-ribose 1-phosphate: step 1/6. In terms of biological role, catalyzes the interconversion of methylthioribose-1-phosphate (MTR-1-P) into methylthioribulose-1-phosphate (MTRu-1-P). The protein is Methylthioribose-1-phosphate isomerase of Azotobacter vinelandii (strain DJ / ATCC BAA-1303).